The sequence spans 424 residues: 23S rRNA (uracil(1939)-C(5))-methyltransferase RlmD (424 aa).

The region spanning 1–56 is the TRAM domain; the sequence is MEKFPAVTVFDLDYQGRGVAKIDGQVVFIEGALPDETVTFCKTSAKKQFIEAVVDE. Positions 69, 75, 78, and 155 each coordinate [4Fe-4S] cluster. S-adenosyl-L-methionine contacts are provided by Gln255, Phe284, Asn289, Glu305, Asp333, and Asp354. Cys380 functions as the Nucleophile in the catalytic mechanism.

The protein belongs to the class I-like SAM-binding methyltransferase superfamily. RNA M5U methyltransferase family. RlmD subfamily.

The enzyme catalyses uridine(1939) in 23S rRNA + S-adenosyl-L-methionine = 5-methyluridine(1939) in 23S rRNA + S-adenosyl-L-homocysteine + H(+). Functionally, catalyzes the formation of 5-methyl-uridine at position 1939 (m5U1939) in 23S rRNA. This chain is 23S rRNA (uracil(1939)-C(5))-methyltransferase RlmD, found in Dichelobacter nodosus (strain VCS1703A).